A 287-amino-acid polypeptide reads, in one-letter code: Anthocyanidin 3-O-glucosyltransferase 7 (287 aa).

UDP-alpha-D-glucose contacts are provided by Ala162, Gln164, His179, Trp182, Asn183, Ser184, and Glu187. Gly202 serves as a coordination point for an anthocyanidin. 2 residues coordinate UDP-alpha-D-glucose: Asp203 and Gln204.

The protein belongs to the UDP-glycosyltransferase family. In terms of tissue distribution, expressed in cotyledons, hypocotyls, roots and leaves.

The catalysed reaction is an anthocyanidin + UDP-alpha-D-glucose + H(+) = an anthocyanidin 3-O-beta-D-glucoside + UDP. It participates in pigment biosynthesis; anthocyanin biosynthesis. In terms of biological role, in the presence of other necessary color factors, this glycosylation reaction allows the accumulation of anthocyanin pigments. The protein is Anthocyanidin 3-O-glucosyltransferase 7 (GT7) of Manihot esculenta (Cassava).